The chain runs to 398 residues: Palmitoyl-[acyl-carrier-protein] 4-desaturase 3, chloroplastic (398 aa).

Residues methionine 1–arginine 29 constitute a chloroplast transit peptide. Glutamate 139, glutamate 177, histidine 180, glutamate 230, glutamate 263, and histidine 266 together coordinate Fe cation.

Belongs to the fatty acid desaturase type 2 family. In terms of assembly, homodimer. Fe(2+) is required as a cofactor. In terms of tissue distribution, preferentially expressed in the flower labellum. Low expression in leaves.

The protein localises to the plastid. Its subcellular location is the chloroplast stroma. The catalysed reaction is hexadecanoyl-[ACP] + 2 reduced [2Fe-2S]-[ferredoxin] + O2 + 2 H(+) = (4Z)-hexadecenoyl-[ACP] + 2 oxidized [2Fe-2S]-[ferredoxin] + 2 H2O. It functions in the pathway lipid metabolism; fatty acid metabolism. Its function is as follows. Converts palmitoyl-ACP to (4Z)-hexadec-4-enoyl-ACP by introduction of a cis double bond between carbons 4 and 5 of the acyl chain. In Ophrys arachnitiformis subsp. archipelagi (Orchid), this protein is Palmitoyl-[acyl-carrier-protein] 4-desaturase 3, chloroplastic (SAD3).